The sequence spans 112 residues: Cytochrome c (112 aa).

Residues Cys-23, Cys-26, His-27, and Met-89 each coordinate heme c.

Belongs to the cytochrome c family. Binds 1 heme c group covalently per subunit.

The protein resides in the mitochondrion intermembrane space. In terms of biological role, electron carrier protein. The oxidized form of the cytochrome c heme group can accept an electron from the heme group of the cytochrome c1 subunit of cytochrome reductase. Cytochrome c then transfers this electron to the cytochrome oxidase complex, the final protein carrier in the mitochondrial electron-transport chain. This is Cytochrome c (CYC1) from Chlamydomonas reinhardtii (Chlamydomonas smithii).